The following is a 555-amino-acid chain: Glutamine--tRNA ligase (555 aa).

The short motif at 34–44 (PEPNGYLHIGH) is the 'HIGH' region element. ATP contacts are provided by residues 35-37 (EPN) and 41-47 (HIGHAKS). Residues D67 and Y212 each contribute to the L-glutamine site. Residues T231, 261-262 (RL), and 269-271 (MSK) each bind ATP. The 'KMSKS' region motif lies at 268 to 272 (VMSKR). The segment at 317-324 (TKQDNTIE) is interaction with tRNA.

This sequence belongs to the class-I aminoacyl-tRNA synthetase family. As to quaternary structure, monomer.

Its subcellular location is the cytoplasm. The catalysed reaction is tRNA(Gln) + L-glutamine + ATP = L-glutaminyl-tRNA(Gln) + AMP + diphosphate. The protein is Glutamine--tRNA ligase of Salmonella schwarzengrund (strain CVM19633).